We begin with the raw amino-acid sequence, 175 residues long: Protein LpfE (175 aa).

An N-terminal signal peptide occupies residues 1–20 (MKNLHALMPACLLLTASAMA).

This sequence belongs to the fimbrial protein family.

The protein localises to the fimbrium. The protein is Protein LpfE (lpfE) of Salmonella typhimurium (strain LT2 / SGSC1412 / ATCC 700720).